Here is a 138-residue protein sequence, read N- to C-terminus: Large ribosomal subunit protein uL16 (138 aa).

Residues 1–14 (MLQPKRTKYRRTHR) show a composition bias toward basic residues. The disordered stretch occupies residues 1–24 (MLQPKRTKYRRTHRLQHDKGEAHT). The segment covering 15-24 (LQHDKGEAHT) has biased composition (basic and acidic residues).

The protein belongs to the universal ribosomal protein uL16 family. Part of the 50S ribosomal subunit.

Its function is as follows. Binds 23S rRNA and is also seen to make contacts with the A and possibly P site tRNAs. This Mycoplasma mobile (strain ATCC 43663 / 163K / NCTC 11711) (Mesomycoplasma mobile) protein is Large ribosomal subunit protein uL16.